Reading from the N-terminus, the 420-residue chain is Glucose-1-phosphate adenylyltransferase (420 aa).

Alpha-D-glucose 1-phosphate contacts are provided by residues Y107, G172, E187–K188, and S205.

This sequence belongs to the bacterial/plant glucose-1-phosphate adenylyltransferase family. Homotetramer.

It carries out the reaction alpha-D-glucose 1-phosphate + ATP + H(+) = ADP-alpha-D-glucose + diphosphate. The protein operates within glycan biosynthesis; glycogen biosynthesis. In terms of biological role, involved in the biosynthesis of ADP-glucose, a building block required for the elongation reactions to produce glycogen. Catalyzes the reaction between ATP and alpha-D-glucose 1-phosphate (G1P) to produce pyrophosphate and ADP-Glc. The protein is Glucose-1-phosphate adenylyltransferase of Rhizobium leguminosarum bv. trifolii (strain WSM2304).